We begin with the raw amino-acid sequence, 284 residues long: 4-hydroxybenzoate octaprenyltransferase (284 aa).

Transmembrane regions (helical) follow at residues 33–53, 93–113, 136–156, 159–179, 209–229, 235–252, and 264–284; these read VIAAQGIPSWDVLIVFVLGVF, IGLFLVLAVSSFLLVLTMNPL, HIPQLFLGLAFSWAIPMAWAA, GELPVMVWFVFVINALWTIAY, LIIGVLQLVTLAMLVGLGQFY, YYWTVLIAASLFVYQQHL, and AFLNNNYVGMVIAIGLLVAFW.

Belongs to the UbiA prenyltransferase family. The cofactor is Mg(2+).

The protein localises to the cell inner membrane. The enzyme catalyses all-trans-octaprenyl diphosphate + 4-hydroxybenzoate = 4-hydroxy-3-(all-trans-octaprenyl)benzoate + diphosphate. It participates in cofactor biosynthesis; ubiquinone biosynthesis. Its function is as follows. Catalyzes the prenylation of para-hydroxybenzoate (PHB) with an all-trans polyprenyl group. Mediates the second step in the final reaction sequence of ubiquinone-8 (UQ-8) biosynthesis, which is the condensation of the polyisoprenoid side chain with PHB, generating the first membrane-bound Q intermediate 3-octaprenyl-4-hydroxybenzoate. This Vibrio parahaemolyticus serotype O3:K6 (strain RIMD 2210633) protein is 4-hydroxybenzoate octaprenyltransferase.